The primary structure comprises 277 residues: Undecaprenyl-diphosphatase (277 aa).

Transmembrane regions (helical) follow at residues 19 to 39 (FLPV…PFYG), 44 to 64 (FDDL…LFLY), 89 to 109 (FHFL…GFIA), 122 to 142 (LLEI…VAEW), 154 to 174 (IGFK…IPGM), 195 to 215 (AEFS…YKLI), 224 to 244 (NTIP…TLVI), and 257 to 277 (SVFG…TKLI).

This sequence belongs to the UppP family.

It localises to the cell inner membrane. It carries out the reaction di-trans,octa-cis-undecaprenyl diphosphate + H2O = di-trans,octa-cis-undecaprenyl phosphate + phosphate + H(+). In terms of biological role, catalyzes the dephosphorylation of undecaprenyl diphosphate (UPP). Confers resistance to bacitracin. In Leptospira interrogans serogroup Icterohaemorrhagiae serovar copenhageni (strain Fiocruz L1-130), this protein is Undecaprenyl-diphosphatase.